We begin with the raw amino-acid sequence, 279 residues long: Pantothenate synthetase (279 aa).

An ATP-binding site is contributed by 27–34 (MGYLHEGH). The active-site Proton donor is the histidine 34. Glutamine 58 is a binding site for (R)-pantoate. Glutamine 58 provides a ligand contact to beta-alanine. 144–147 (GKKD) is a binding site for ATP. Position 150 (glutamine 150) interacts with (R)-pantoate. Residues valine 173 and 181–184 (MSSR) contribute to the ATP site.

The protein belongs to the pantothenate synthetase family. Homodimer.

It localises to the cytoplasm. The catalysed reaction is (R)-pantoate + beta-alanine + ATP = (R)-pantothenate + AMP + diphosphate + H(+). Its pathway is cofactor biosynthesis; (R)-pantothenate biosynthesis; (R)-pantothenate from (R)-pantoate and beta-alanine: step 1/1. Functionally, catalyzes the condensation of pantoate with beta-alanine in an ATP-dependent reaction via a pantoyl-adenylate intermediate. In Geobacter sp. (strain M21), this protein is Pantothenate synthetase.